The sequence spans 301 residues: 1,5-anhydro-D-fructose reductase (301 aa).

Asp-35 contributes to the NADP(+) binding site. Tyr-40 functions as the Proton donor in the catalytic mechanism. His-102 is a binding site for substrate. NADP(+) contacts are provided by residues Gln-175 and 246–258 (IPKSVTPSRIREN).

It belongs to the aldo/keto reductase family. As to quaternary structure, monomer.

Its subcellular location is the cytoplasm. The catalysed reaction is 1,5-anhydro-D-glucitol + NADP(+) = 1,5-anhydro-D-fructose + NADPH + H(+). With respect to regulation, inhibited by p-chloromercuribenzoic acid and alkyliodines. Catalyzes the NADPH-dependent reduction of 1,5-anhydro-D-fructose (AF) to 1,5-anhydro-D-glucitol. This is 1,5-anhydro-D-fructose reductase (Akr1e2) from Mus musculus (Mouse).